We begin with the raw amino-acid sequence, 152 residues long: 3-hydroxyacyl-[acyl-carrier-protein] dehydratase FabZ (152 aa).

His-58 is a catalytic residue.

The protein belongs to the thioester dehydratase family. FabZ subfamily.

It localises to the cytoplasm. The enzyme catalyses a (3R)-hydroxyacyl-[ACP] = a (2E)-enoyl-[ACP] + H2O. Its function is as follows. Involved in unsaturated fatty acids biosynthesis. Catalyzes the dehydration of short chain beta-hydroxyacyl-ACPs and long chain saturated and unsaturated beta-hydroxyacyl-ACPs. This is 3-hydroxyacyl-[acyl-carrier-protein] dehydratase FabZ from Prochlorococcus marinus subsp. pastoris (strain CCMP1986 / NIES-2087 / MED4).